The sequence spans 158 residues: Cyclic pyranopterin monophosphate synthase (158 aa).

Substrate contacts are provided by residues 76 to 78 (MCH) and 114 to 115 (ME). D129 is an active-site residue.

Belongs to the MoaC family. Homohexamer; trimer of dimers.

The catalysed reaction is (8S)-3',8-cyclo-7,8-dihydroguanosine 5'-triphosphate = cyclic pyranopterin phosphate + diphosphate. The protein operates within cofactor biosynthesis; molybdopterin biosynthesis. Catalyzes the conversion of (8S)-3',8-cyclo-7,8-dihydroguanosine 5'-triphosphate to cyclic pyranopterin monophosphate (cPMP). This Clostridium perfringens (strain 13 / Type A) protein is Cyclic pyranopterin monophosphate synthase.